A 1025-amino-acid chain; its full sequence is Exportin-T (1025 aa).

This sequence belongs to the exportin family.

It localises to the nucleus. The protein localises to the cytoplasm. Functionally, tRNA nucleus export receptor which facilitates tRNA translocation across the nuclear pore complex. Involved in pre-tRNA splicing, probably by affecting the interaction of pre-tRNA with splicing endonuclease. The chain is Exportin-T (LOS1) from Candida albicans (strain SC5314 / ATCC MYA-2876) (Yeast).